The following is a 360-amino-acid chain: Peptide chain release factor 1 (360 aa).

An N5-methylglutamine modification is found at Q235. Residues 284–304 (KVDSERSADRKSQVGSGDRSE) are disordered.

This sequence belongs to the prokaryotic/mitochondrial release factor family. In terms of processing, methylated by PrmC. Methylation increases the termination efficiency of RF1.

It is found in the cytoplasm. In terms of biological role, peptide chain release factor 1 directs the termination of translation in response to the peptide chain termination codons UAG and UAA. The chain is Peptide chain release factor 1 from Agrobacterium fabrum (strain C58 / ATCC 33970) (Agrobacterium tumefaciens (strain C58)).